Here is a 438-residue protein sequence, read N- to C-terminus: Coenzyme A disulfide reductase (438 aa).

Residue 8 to 33 (GAVAGGATCASQIRRLDKESDIIIFE) coordinates FAD. 5 residues coordinate substrate: threonine 15, glutamine 19, arginine 22, serine 39, and asparagine 42. Catalysis depends on cysteine 43, which acts as the Nucleophile. The Redox-active role is filled by cysteine 43. Lysine 71 contributes to the substrate binding site. 151 to 166 (VLVIGAGYVSLEVLEN) serves as a coordination point for NADP(+). 267–277 (TNVPNIYAIGD) provides a ligand contact to FAD. Histidine 299 is a substrate binding site. Residue tyrosine 419 participates in FAD binding. Lysine 427 serves as a coordination point for substrate.

It belongs to the class-III pyridine nucleotide-disulfide oxidoreductase family. In terms of assembly, homodimer. It depends on FAD as a cofactor.

It catalyses the reaction NADP(+) + 2 CoA = CoA-disulfide + NADPH + H(+). Its function is as follows. Catalyzes specifically the NADPH-dependent reduction of coenzyme A disulfide. In Staphylococcus aureus (strain JH1), this protein is Coenzyme A disulfide reductase.